Reading from the N-terminus, the 288-residue chain is Elongation factor Ts (288 aa).

The involved in Mg(2+) ion dislocation from EF-Tu stretch occupies residues 82–85; it reads TDFV.

It belongs to the EF-Ts family.

Its subcellular location is the cytoplasm. In terms of biological role, associates with the EF-Tu.GDP complex and induces the exchange of GDP to GTP. It remains bound to the aminoacyl-tRNA.EF-Tu.GTP complex up to the GTP hydrolysis stage on the ribosome. The sequence is that of Elongation factor Ts from Pelodictyon phaeoclathratiforme (strain DSM 5477 / BU-1).